Reading from the N-terminus, the 400-residue chain is Argininosuccinate synthase (400 aa).

Residue Ala-9–Ser-17 coordinates ATP. Tyr-87 is a binding site for L-citrulline. Gly-117 is an ATP binding site. Thr-119, Asn-123, and Asp-124 together coordinate L-aspartate. Asn-123 provides a ligand contact to L-citrulline. L-citrulline-binding residues include Arg-127, Ser-176, Ser-185, Glu-261, and Tyr-273.

It belongs to the argininosuccinate synthase family. Type 1 subfamily. Homotetramer.

Its subcellular location is the cytoplasm. The enzyme catalyses L-citrulline + L-aspartate + ATP = 2-(N(omega)-L-arginino)succinate + AMP + diphosphate + H(+). Its pathway is amino-acid biosynthesis; L-arginine biosynthesis; L-arginine from L-ornithine and carbamoyl phosphate: step 2/3. The chain is Argininosuccinate synthase from Chlorobium luteolum (strain DSM 273 / BCRC 81028 / 2530) (Pelodictyon luteolum).